A 202-amino-acid polypeptide reads, in one-letter code: Dephospho-CoA kinase (202 aa).

The region spanning 4-200 (VVGVTGGIGS…QRYLAATVAQ (197 aa)) is the DPCK domain. 12–17 (GSGKSA) provides a ligand contact to ATP.

This sequence belongs to the CoaE family.

It is found in the cytoplasm. The enzyme catalyses 3'-dephospho-CoA + ATP = ADP + CoA + H(+). It functions in the pathway cofactor biosynthesis; coenzyme A biosynthesis; CoA from (R)-pantothenate: step 5/5. Catalyzes the phosphorylation of the 3'-hydroxyl group of dephosphocoenzyme A to form coenzyme A. The polypeptide is Dephospho-CoA kinase (Idiomarina loihiensis (strain ATCC BAA-735 / DSM 15497 / L2-TR)).